The following is a 180-amino-acid chain: Large ribosomal subunit protein uL6 (180 aa).

The protein belongs to the universal ribosomal protein uL6 family. Part of the 50S ribosomal subunit.

Its function is as follows. This protein binds to the 23S rRNA, and is important in its secondary structure. It is located near the subunit interface in the base of the L7/L12 stalk, and near the tRNA binding site of the peptidyltransferase center. The polypeptide is Large ribosomal subunit protein uL6 (Borrelia garinii subsp. bavariensis (strain ATCC BAA-2496 / DSM 23469 / PBi) (Borreliella bavariensis)).